A 464-amino-acid chain; its full sequence is Protein FAM90A1 (464 aa).

Disordered regions lie at residues 1–43 (MMAR…PRLK), 71–294 (PNFG…KRSA), 312–386 (PFQI…AASH), 412–437 (PSFH…SEGP), and 445–464 (VLYE…SDLE). Composition is skewed to basic and acidic residues over residues 74 to 83 (GEKEGKENLK) and 97 to 114 (NKDK…DPQR). A compositionally biased stretch (low complexity) spans 180 to 197 (LASLSPLRKASLSSSSSL). Residues 344 to 355 (TSPQTGTRTPAQ) show a composition bias toward polar residues.

This sequence belongs to the FAM90 family.

The protein is Protein FAM90A1 (FAM90A1) of Homo sapiens (Human).